A 1507-amino-acid polypeptide reads, in one-letter code: DE-cadherin (1507 aa).

Positions 1–69 (MSTSVQRMSR…AISLLSPALA (69 aa)) are cleaved as a signal peptide. Positions 70 to 261 (LHSPPDKNFS…IYLKRPIDKR (192 aa)) are excised as a propeptide. Cadherin domains lie at 97–195 (VKEE…APAF), 204–301 (MSEN…PPSF), 311–412 (LKEN…IPYY), 420–522 (ILEN…KPHF), 532–633 (LLED…TILE), 631–733 (ILEE…APFL), and 741–835 (WQEN…NDNA). Residues 262 to 1328 (PGQSYAIIVR…VAFSFGIDRN (1067 aa)) lie on the Extracellular side of the membrane. N-linked (GlcNAc...) asparagine glycans are attached at residues Asn317, Asn466, and Asn552. N-linked (GlcNAc...) asparagine glycans are attached at residues Asn766, Asn949, Asn983, Asn999, and Asn1073. The region spanning 1084 to 1123 (VQAQCVCEAPLMRRCLNGGSPRYGENDVCDCIDGFTGPHC) is the EGF-like domain. 2 disulfide bridges follow: Cys1098–Cys1112 and Cys1114–Cys1123. The 189-residue stretch at 1125-1313 (LVSVAFYGSG…SVFRNIDSGC (189 aa)) folds into the Laminin G-like domain. 3 N-linked (GlcNAc...) asparagine glycosylation sites follow: Asn1145, Asn1274, and Asn1290. A disulfide bridge connects residues Cys1287 and Cys1313. A helical membrane pass occupies residues 1329–1349 (FIIAIIVCLALLLIILLAVVV). The Cytoplasmic portion of the chain corresponds to 1350–1507 (QKKQKNGWHE…NVDDDQGWRI (158 aa)). The tract at residues 1350 to 1507 (QKKQKNGWHE…NVDDDQGWRI (158 aa)) is interaction with Inx2. The interval 1488 to 1507 (YGEEPSDTDSNVDDDQGWRI) is disordered. Phosphoserine is present on Ser1493.

As to quaternary structure, interacts (via cytoplasmic region) with Inx2 (via cytoplasmic loop). Interacts with Hakai. Interacts with Myo31DF. Post-translationally, N-glycosylation is important for biosynthesis and function. As to expression, in early stage 9 and stage 10 oocytes, expressed in border cells, strongly expressed in polar cells and very weakly expressed in the nurse cells (at protein level). In the embryo, expressed in the leading edge cells of the dorsal epidermis (at protein level). Stage 10 embryos exhibit intense expression in epithelial cells. Stage 14 embryos show expression in the hindgut (at the apical poles of cell-cell boundaries), at the apical junctions of tracheal cells and in the dorsal longitudinal trunk. In stage 16 embryos the glial midline cells of the central nervous system show strong expression.

Its subcellular location is the cell membrane. The protein resides in the apical cell membrane. Its function is as follows. Cadherins are calcium-dependent cell adhesion proteins. In connecting cells they preferentially interact with themselves in a homophilic manner; cadherins may thus contribute to the sorting of heterogeneous cell types. During oogenesis, integral component of the guidance mechanisms that regulate the directional persistent collective migration of the border cell (BC) cluster through the nurse cells to the oocyte. Functions downstream of the two chemoattractant receptors, Pvr and Egfr, to promote BC adhesion between the leader cells of the migrating cluster and the surrounding nurse cells. This adhesion increases Rac1 signaling in the leading cells, which in turn stabilizes DE-cadherin/DE-cadherin adhesions through the formation of forward-directed protrusions which attach/detach to the surrounding nurse cells in order to pull the cluster through the egg chamber to the oocyte. Within the BC cluster, also promotes adhesion between BCs, and between BCs and polar cells which enables the lead BC to communicate direction to the other cells in the cluster, providing polarity to each individual cell and ensuring collective behavior. May function in cell intercalation in the lateral epidermis during germband extension. Contributes to the determination of body left-right asymmetry by enhancing Myo31DF activity and inhibiting Myo61F activity. This Drosophila melanogaster (Fruit fly) protein is DE-cadherin.